The chain runs to 194 residues: ATP-dependent Clp protease proteolytic subunit (194 aa).

S98 serves as the catalytic Nucleophile. Residue H123 is part of the active site.

It belongs to the peptidase S14 family. As to quaternary structure, fourteen ClpP subunits assemble into 2 heptameric rings which stack back to back to give a disk-like structure with a central cavity, resembling the structure of eukaryotic proteasomes.

It is found in the cytoplasm. It carries out the reaction Hydrolysis of proteins to small peptides in the presence of ATP and magnesium. alpha-casein is the usual test substrate. In the absence of ATP, only oligopeptides shorter than five residues are hydrolyzed (such as succinyl-Leu-Tyr-|-NHMec, and Leu-Tyr-Leu-|-Tyr-Trp, in which cleavage of the -Tyr-|-Leu- and -Tyr-|-Trp bonds also occurs).. Functionally, cleaves peptides in various proteins in a process that requires ATP hydrolysis. Has a chymotrypsin-like activity. Plays a major role in the degradation of misfolded proteins. The polypeptide is ATP-dependent Clp protease proteolytic subunit (Sodalis glossinidius (strain morsitans)).